A 477-amino-acid polypeptide reads, in one-letter code: Stromelysin-1 (477 aa).

Positions 1–17 (MKSLPILLLLCVAVCSA) are cleaved as a signal peptide. A propeptide spans 18–99 (YPLDGAARGE…PRCGVPDVGH (82 aa)) (activation peptide). Positions 90–97 (PRCGVPDV) match the Cysteine switch motif. Cys92 lines the Zn(2+) pocket. The Ca(2+) site is built by Asp124 and Asp158. Positions 168 and 170 each coordinate Zn(2+). Residues Asp175, Gly176, Gly178, and Val180 each coordinate Ca(2+). His183 provides a ligand contact to Zn(2+). Positions 190, 192, and 194 each coordinate Ca(2+). His196 serves as a coordination point for Zn(2+). Residues Asp198, Asp199, and Glu201 each contribute to the Ca(2+) site. His218 provides a ligand contact to Zn(2+). Residue Glu219 is part of the active site. Residues His222 and His228 each coordinate Zn(2+). The tract at residues 262 to 287 (LYGPPPDSPETPLVPTEPVPPEPGTP) is disordered. The segment covering 276–285 (PTEPVPPEPG) has biased composition (pro residues). Hemopexin repeat units follow at residues 287 to 336 (PANC…WPSL), 337 to 383 (PSGV…GFPP), 385 to 433 (VRKI…FPGI), and 434 to 477 (DSKI…WLNC). Cys290 and Cys477 are joined by a disulfide. Asp297 is a binding site for Ca(2+). Positions 389 and 438 each coordinate Ca(2+).

This sequence belongs to the peptidase M10A family. Ca(2+) is required as a cofactor. Requires Zn(2+) as cofactor. Post-translationally, directly cleaved by HTRA2 to produce active form.

The protein resides in the secreted. It is found in the extracellular space. The protein localises to the extracellular matrix. Its subcellular location is the nucleus. It localises to the cytoplasm. It catalyses the reaction Preferential cleavage where P1', P2' and P3' are hydrophobic residues.. Enzymatic activity is activated by HTRA2 in dopaminergic cells upon mitochondrial stress. Functionally, metalloproteinase with a rather broad substrate specificity that can degrade fibronectin, laminin, gelatins of type I, III, IV, and V; collagens III, IV, X, and IX, and cartilage proteoglycans. Activates different molecules including growth factors, plasminogen or other matrix metalloproteinases such as MMP9. Once released into the extracellular matrix (ECM), the inactive pro-enzyme is activated by the plasmin cascade signaling pathway. Also acts intracellularly. For example, in dopaminergic neurons, gets activated by the serine protease HTRA2 upon stress and plays a pivotal role in DA neuronal degeneration by mediating microglial activation and alpha-synuclein/SNCA cleavage. In addition, plays a role in immune response and possesses antiviral activity against various viruses such as vesicular stomatitis virus, influenza A virus (H1N1) and human herpes virus 1. Mechanistically, translocates from the cytoplasm into the cell nucleus upon virus infection to influence NF-kappa-B activities. The chain is Stromelysin-1 (MMP3) from Homo sapiens (Human).